An 800-amino-acid chain; its full sequence is Small ribosomal subunit protein uS3c (800 aa).

Residues 1–118 (MGQKVHPSGF…LQVKKDILVK (118 aa)) form an S3-like 1st part region. The intervening sequence (IVS) stretch occupies residues 119 to 664 (LQKTRQYLTN…FLDCKFEELE (546 aa)). The S3-like 2nd part stretch occupies residues 665–800 (RRKTMWVQNL…TKLVTESTGA (136 aa)).

This sequence belongs to the universal ribosomal protein uS3 family. Part of the 30S ribosomal subunit.

It localises to the plastid. Its subcellular location is the chloroplast. In Chlamydomonas moewusii (Chlamydomonas eugametos), this protein is Small ribosomal subunit protein uS3c (rps3).